Here is a 92-residue protein sequence, read N- to C-terminus: Large ribosomal subunit protein bL25 (92 aa).

It belongs to the bacterial ribosomal protein bL25 family. Part of the 50S ribosomal subunit; part of the 5S rRNA/L5/L18/L25 subcomplex. Contacts the 5S rRNA. Binds to the 5S rRNA independently of L5 and L18.

Its function is as follows. This is one of the proteins that binds to the 5S RNA in the ribosome where it forms part of the central protuberance. This Vibrio cholerae serotype O1 (strain ATCC 39541 / Classical Ogawa 395 / O395) protein is Large ribosomal subunit protein bL25.